Here is an 89-residue protein sequence, read N- to C-terminus: uncharacterized protein (89 aa).

Composition is skewed to basic residues over residues 1 to 17 and 65 to 89; these read MPPH…HGHH and HHGH…HGHH. Disordered stretches follow at residues 1–25 and 60–89; these read MPPH…ITPV and LETG…HGHH.

This is an uncharacterized protein from Dictyostelium discoideum (Social amoeba).